Consider the following 951-residue polypeptide: Pentatricopeptide repeat-containing protein At4g19220, mitochondrial (951 aa).

The transit peptide at 1 to 63 (MLLVMVRSST…RHFTSSVLSP (63 aa)) directs the protein to the mitochondrion. PPR repeat units follow at residues 121–151 (DLATSSKLLTFYGRTGELVSSSCLFDELKEK), 152–186 (DVIVWNSMITALNQNGRYIAAVGLFIEMIHKGNEF), 187–221 (DSTTLLLAASALSSLHLSRKCSMLHCLAIETGLVG), 222–252 (DSSLCNALMNLYAKGENLSSAECVFTHMEHR), 253–287 (DIVSWNTIMTKCLANGHPRKSLQYFKSMTGSGQEA), 288–322 (DTVTFSCVISACSSIEELTLGESLHGLVIKSGYSP), 325–355 (HVSVGNSIISMYSKCGDTEAAETVFEELVCR), 356–386 (DVISSNAILNGFAANGMFEEAFGILNQMQSV), 392–426 (DIATVVSITSICGDLSFSREGRAVHGYTVRMEMQS), 428–458 (ALEVINSVIDMYGKCGLTTQAELLFKTTTHR), 459–489 (DLVSWNSMISAFSQNGFTHKAKNLFKEVVSE), 496–530 (SLSTVLAILTSCDSSDSLIFGKSVHCWLQKLGFGD), 531–561 (NMLSANSVINMYIGCRDLTSAFLRLETMSET), 563–597 (DLTSWNSVISGCASSGHHLESLRAFQAMSREGKIR), 599–629 (DLITLLGTISASGNLGLVLQGRCFHGLAIKS), 634–668 (DTQLQNTLITMYGRCKDIESAVKVFGLISDPNLCS), 669–695 (WNCVISALSQNKAGREVFQLFRNLKLE), 697–731 (NEITFVGLLSASTQLGSTSYGMQAHCHLIRRGFQA), 732–762 (NPFVSAALVDMYSSCGMLETGMKVFRNSGVN), 763–793 (SISAWNSVISAHGFHGMGEKAMELFKELSSN), 799–829 (NKSSFISLLSACSHSGFIDEGLSYYKQMEEK), and 835–865 (VTEHRVWIVDMLGRAGKLREAYEFITGIGEP). Residues 870 to 945 (VWGALLSACN…LPGYSVIDVR (76 aa)) are type E motif.

Belongs to the PPR family. PCMP-E subfamily.

It is found in the mitochondrion. The chain is Pentatricopeptide repeat-containing protein At4g19220, mitochondrial (PCMP-E2) from Arabidopsis thaliana (Mouse-ear cress).